A 582-amino-acid polypeptide reads, in one-letter code: MTQGPGGRAPPAPPAPPEPEAPTTFCALLPRMPQWKFAAPGGFLGRGPAAARAAGASGGADPQPEPAGPGGVPALAAAVLGACEPRCAAPCPLPALSRCRGAGSRGSRGGRGAAGSGDAAAAAEWIRKGSFIHKPAHGWLHPDARVLGPGVSYVVRYMGCIEVLRSMRSLDFNTRTQVTREAINRLHEAVPGVRGSWKKKAPNKALASVLGKSNLRFAGMSISIHISTDGLSLSVPATRQVIANHHMPSISFASGGDTDMTDYVAYVAKDPINQRACHILECCEGLAQSIISTVGQAFELRFKQYLHSPPKVALPPERLAGPEESAWGDEEDSLEHNYYNSIPGKEPPLGGLVDSRLALTQPCALTALDQGPSPSLRDACSLPWDVGSTGTAPPGDGYVQADARGPPDHEEHLYVNTQGLDAPEPEDSPKKDLFDMRPFEDALKLHECSVAAGVTAAPLPLEDQWPSPPTRRAPVAPTEEQLRQEPWYHGRMSRRAAERMLRADGDFLVRDSVTNPGQYVLTGMHAGQPKHLLLVDPEGVVRTKDVLFESISHLIDHHLQNGQPIVAAESELHLRGVVSREP.

Disordered regions lie at residues 1-24 (MTQGPGGRAPPAPPAPPEPEAPTT) and 47-70 (GPAAARAAGASGGADPQPEPAGPG). Residues 8–20 (RAPPAPPAPPEPE) show a composition bias toward pro residues. The 183-residue stretch at 147–329 (LGPGVSYVVR…AGPEESAWGD (183 aa)) folds into the PID domain. The CH1 stretch occupies residues 330-486 (EEDSLEHNYY…PTEEQLRQEP (157 aa)). Tyrosine 338, tyrosine 339, and tyrosine 414 each carry phosphotyrosine. Residues 460–481 (PLEDQWPSPPTRRAPVAPTEEQ) are disordered. The region spanning 487–578 (WYHGRMSRRA…ESELHLRGVV (92 aa)) is the SH2 domain.

Interacts with the Trk receptors in a phosphotyrosine-dependent manner and MEGF12. Once activated, binds to GRB2. Phosphorylated on tyrosines by the Trk receptors. In terms of tissue distribution, expressed in brain. Expressed at high level in the hypothalamus and at low level in the caudate nucleus.

In terms of biological role, signaling adapter that couples activated growth factor receptors to signaling pathway in neurons. Involved in the signal transduction pathways of neurotrophin-activated Trk receptors in cortical neurons. The chain is SHC-transforming protein 2 (SHC2) from Homo sapiens (Human).